Consider the following 90-residue polypeptide: Large ribosomal subunit protein eL37 (90 aa).

Cys-19, Cys-22, Cys-34, and Cys-37 together coordinate Zn(2+). The segment at 19-37 adopts a C4-type zinc-finger fold; the sequence is CRRCGRQSYHKQKNSCSSC. Residues 21 to 31 show a composition bias toward basic residues; sequence RCGRQSYHKQK. The segment at 21–59 is disordered; sequence RCGRQSYHKQKNSCSSCGYPNPKMRNPGSIKARRRRTIG.

Belongs to the eukaryotic ribosomal protein eL37 family. Zn(2+) serves as cofactor.

Functionally, binds to the 23S rRNA. The sequence is that of Large ribosomal subunit protein eL37 (RPL37) from Encephalitozoon cuniculi (strain GB-M1) (Microsporidian parasite).